Reading from the N-terminus, the 287-residue chain is Histone H1 (287 aa).

Residues 1-11 are compositionally biased toward low complexity; sequence MATEEPVIVNE. Disordered stretches follow at residues 1 to 58 and 120 to 287; these read MATE…THPP and YKLP…RGRK. Residues 33 to 51 show a composition bias toward basic residues; that stretch reads GKAKKETKAKKPAAPRKRS. Residues 55–124 enclose the H15 domain; it reads THPPYFEMIK…KVKNSYKLPS (70 aa). Residues 135 to 202 show a composition bias toward basic residues; that stretch reads AKKKPAAAKS…KAKPVAKAKP (68 aa). Positions 203–248 are enriched in low complexity; sequence KAAAAAKPKAAVKPKAAPAKTKAAVKPNLKAKTTTAKVAKTATRTT. Residues 276–287 are compositionally biased toward basic residues; that stretch reads PAKKATPKRGRK.

This sequence belongs to the histone H1/H5 family.

It is found in the nucleus. It localises to the chromosome. Histones H1 are necessary for the condensation of nucleosome chains into higher-order structures. The polypeptide is Histone H1 (Solanum lycopersicum (Tomato)).